The primary structure comprises 73 residues: Protein DSS1 HOMOLOG ON CHROMOSOME V (73 aa).

The protein belongs to the DSS1/SEM1 family. In terms of assembly, part of the 26S proteasome. Interacts with BRCA2B. Interacts with EER5. Interacts with UCH1 and UCH2.

In terms of biological role, subunit of the 26S proteasome which plays a role in ubiquitin-dependent proteolysis. Also associates with the TREX-2 complex that is required for transcription-coupled mRNA export. The chain is Protein DSS1 HOMOLOG ON CHROMOSOME V from Arabidopsis thaliana (Mouse-ear cress).